Reading from the N-terminus, the 572-residue chain is Sulfite reductase [NADPH] hemoprotein beta-component (572 aa).

The [4Fe-4S] cluster site is built by C437, C443, C482, and C486. C486 is a siroheme binding site.

It belongs to the nitrite and sulfite reductase 4Fe-4S domain family. Alpha(8)-beta(8). The alpha component is a flavoprotein, the beta component is a hemoprotein. Siroheme is required as a cofactor. It depends on [4Fe-4S] cluster as a cofactor.

The catalysed reaction is hydrogen sulfide + 3 NADP(+) + 3 H2O = sulfite + 3 NADPH + 4 H(+). The protein operates within sulfur metabolism; hydrogen sulfide biosynthesis; hydrogen sulfide from sulfite (NADPH route): step 1/1. Functionally, component of the sulfite reductase complex that catalyzes the 6-electron reduction of sulfite to sulfide. This is one of several activities required for the biosynthesis of L-cysteine from sulfate. The polypeptide is Sulfite reductase [NADPH] hemoprotein beta-component (Staphylococcus epidermidis (strain ATCC 12228 / FDA PCI 1200)).